We begin with the raw amino-acid sequence, 881 residues long: DNA mismatch repair protein MutS (881 aa).

ATP is bound at residue 612-619 (GPNMAGKS).

The protein belongs to the DNA mismatch repair MutS family.

This protein is involved in the repair of mismatches in DNA. It is possible that it carries out the mismatch recognition step. This protein has a weak ATPase activity. This chain is DNA mismatch repair protein MutS, found in Clostridium tetani (strain Massachusetts / E88).